The primary structure comprises 1088 residues: DNA polymerase II large subunit (1088 aa).

This sequence belongs to the archaeal DNA polymerase II family. In terms of assembly, heterodimer of a large subunit and a small subunit.

It carries out the reaction DNA(n) + a 2'-deoxyribonucleoside 5'-triphosphate = DNA(n+1) + diphosphate. The catalysed reaction is Exonucleolytic cleavage in the 3'- to 5'-direction to yield nucleoside 5'-phosphates.. Functionally, possesses two activities: a DNA synthesis (polymerase) and an exonucleolytic activity that degrades single-stranded DNA in the 3'- to 5'-direction. Has a template-primer preference which is characteristic of a replicative DNA polymerase. In Thermoplasma volcanium (strain ATCC 51530 / DSM 4299 / JCM 9571 / NBRC 15438 / GSS1), this protein is DNA polymerase II large subunit (polC).